A 396-amino-acid polypeptide reads, in one-letter code: Ribosomal RNA large subunit methyltransferase I (396 aa).

Residues 2-79 (AVRIKLKPGR…REEEIDREFF (78 aa)) enclose the PUA domain.

This sequence belongs to the methyltransferase superfamily. RlmI family.

It localises to the cytoplasm. The catalysed reaction is cytidine(1962) in 23S rRNA + S-adenosyl-L-methionine = 5-methylcytidine(1962) in 23S rRNA + S-adenosyl-L-homocysteine + H(+). Functionally, specifically methylates the cytosine at position 1962 (m5C1962) of 23S rRNA. In Shewanella sp. (strain ANA-3), this protein is Ribosomal RNA large subunit methyltransferase I.